The following is an 86-amino-acid chain: Putative defensin-like protein 211 (86 aa).

The signal sequence occupies residues M1–S19. Intrachain disulfides connect C55/C72, C58/C77, and C62/C79.

It belongs to the DEFL family.

It localises to the secreted. This Arabidopsis thaliana (Mouse-ear cress) protein is Putative defensin-like protein 211.